We begin with the raw amino-acid sequence, 319 residues long: ATP-dependent 6-phosphofructokinase (319 aa).

Gly-11 is an ATP binding site. Residue 21–25 participates in ADP binding; sequence RAVVR. Residues 72 to 73 and 102 to 105 each bind ATP; these read RC and GDGS. Asp-103 contacts Mg(2+). Residue 125 to 127 participates in substrate binding; it reads TID. The active-site Proton acceptor is the Asp-127. Residue Arg-154 coordinates ADP. Residues Arg-162 and 169–171 each bind substrate; that span reads MGR. Residues 185-187, Arg-211, and 213-215 contribute to the ADP site; these read GAE and KKH. Substrate is bound by residues Glu-222, Arg-243, and 249-252; that span reads HVQR.

The protein belongs to the phosphofructokinase type A (PFKA) family. ATP-dependent PFK group I subfamily. Prokaryotic clade 'B1' sub-subfamily. As to quaternary structure, homotetramer. Mg(2+) is required as a cofactor.

The protein localises to the cytoplasm. The enzyme catalyses beta-D-fructose 6-phosphate + ATP = beta-D-fructose 1,6-bisphosphate + ADP + H(+). Its pathway is carbohydrate degradation; glycolysis; D-glyceraldehyde 3-phosphate and glycerone phosphate from D-glucose: step 3/4. Allosterically activated by ADP and other diphosphonucleosides, and allosterically inhibited by phosphoenolpyruvate. In terms of biological role, catalyzes the phosphorylation of D-fructose 6-phosphate to fructose 1,6-bisphosphate by ATP, the first committing step of glycolysis. The polypeptide is ATP-dependent 6-phosphofructokinase (Bacillus anthracis (strain A0248)).